The following is a 265-amino-acid chain: MGRSRSRSSSRSKHAKSGKHNKKRSRSREKERVRKRSKSRESKRNRRRESRSRSRSNTASRRERERAASPPDRIDIFGRTVSKRSSLDEKQKREDEEKKAEYERQRRIRQQEIEEKLIEEETARRVEELVAKRVEEELEKRKDEIEREVLRRVEEAKRIMEKQLLEELERQRQAELAAQKAREEEERAKREELERILEENNRKIADAQAKLAEEQLKIVEEQRKIHEERMKLEQERQRQQKEEQKIILGKGKSRPKLSFSLKSPD.

Positions 1 to 54 are enriched in basic residues; sequence MGRSRSRSSSRSKHAKSGKHNKKRSRSREKERVRKRSKSRESKRNRRRESRSRS. Residues 1–66 form a necessary and sufficient for RNA binding region; the sequence is MGRSRSRSSS…NTASRRERER (66 aa). The interval 1–106 is disordered; sequence MGRSRSRSSS…EKKAEYERQR (106 aa). Composition is skewed to basic and acidic residues over residues 60–76 and 85–106; these read SRRE…RIDI and SSLD…ERQR. Residues 67-265 are necessary and sufficient for transcriptional regulation; sequence AASPPDRIDI…KLSFSLKSPD (199 aa). The LXXLL motif 1; degenerate signature appears at 164–168; that stretch reads LLEEL. The LXXLL motif 2; degenerate motif lies at 193–197; the sequence is LERIL. Basic and acidic residues predominate over residues 229–245; it reads RMKLEQERQRQQKEEQK. The interval 229–265 is disordered; that stretch reads RMKLEQERQRQQKEEQKIILGKGKSRPKLSFSLKSPD.

The protein belongs to the ARGLU1 family.

It is found in the nucleus. Its subcellular location is the nucleus speckle. The protein localises to the chromosome. Functionally, dual function regulator of gene expression; regulator of transcription and modulator of alternative splicing. General coactivator of nuclear receptor-induced gene expression. The sequence is that of Arginine and glutamate-rich protein 1 (arglu1) from Xenopus tropicalis (Western clawed frog).